The following is a 189-amino-acid chain: Elongation factor P (189 aa).

It belongs to the elongation factor P family.

It localises to the cytoplasm. It functions in the pathway protein biosynthesis; polypeptide chain elongation. Functionally, involved in peptide bond synthesis. Stimulates efficient translation and peptide-bond synthesis on native or reconstituted 70S ribosomes in vitro. Probably functions indirectly by altering the affinity of the ribosome for aminoacyl-tRNA, thus increasing their reactivity as acceptors for peptidyl transferase. The protein is Elongation factor P of Pseudomonas fluorescens (strain Pf0-1).